A 507-amino-acid polypeptide reads, in one-letter code: Glucose-6-phosphate isomerase (507 aa).

Residue glutamate 337 is the Proton donor of the active site. Active-site residues include histidine 368 and lysine 478.

This sequence belongs to the GPI family.

The protein localises to the cytoplasm. The enzyme catalyses alpha-D-glucose 6-phosphate = beta-D-fructose 6-phosphate. The protein operates within carbohydrate biosynthesis; gluconeogenesis. It functions in the pathway carbohydrate degradation; glycolysis; D-glyceraldehyde 3-phosphate and glycerone phosphate from D-glucose: step 2/4. Functionally, catalyzes the reversible isomerization of glucose-6-phosphate to fructose-6-phosphate. This chain is Glucose-6-phosphate isomerase, found in Novosphingobium aromaticivorans (strain ATCC 700278 / DSM 12444 / CCUG 56034 / CIP 105152 / NBRC 16084 / F199).